A 312-amino-acid polypeptide reads, in one-letter code: Ribosomal protein L11 methyltransferase (312 aa).

S-adenosyl-L-methionine is bound by residues Thr-160, Gly-181, Asp-203, and Asn-246.

Belongs to the methyltransferase superfamily. PrmA family.

The protein localises to the cytoplasm. It catalyses the reaction L-lysyl-[protein] + 3 S-adenosyl-L-methionine = N(6),N(6),N(6)-trimethyl-L-lysyl-[protein] + 3 S-adenosyl-L-homocysteine + 3 H(+). Its function is as follows. Methylates ribosomal protein L11. This Staphylococcus aureus (strain bovine RF122 / ET3-1) protein is Ribosomal protein L11 methyltransferase.